A 37-amino-acid polypeptide reads, in one-letter code: Esculentin-2Ra (37 aa).

A disulfide bond links cysteine 31 and cysteine 37.

As to expression, expressed by the skin glands.

It localises to the secreted. Functionally, antimicrobial peptide. The sequence is that of Esculentin-2Ra from Pelophylax ridibundus (Marsh frog).